Consider the following 317-residue polypeptide: U5 small nuclear ribonucleoprotein TSSC4 (317 aa).

The span at 1–19 (MAETEAGLEADEPTEDDTL) shows a compositional bias: acidic residues. The interval 1–74 (MAETEAGLEA…PPTGTLTTAV (74 aa)) is disordered. Low complexity predominate over residues 20–37 (PSDTVSLSDSDSDLSLPS). Phosphoserine is present on residues Ser57, Ser64, Ser83, and Ser92. The interval 74–101 (VQPFHLRGMSSTFSQRSHSIFDCLESAA) is hom2; mediates interaction with the U5 snRNP complexes and required for spliceosomal tri-snRNP complex assembly. The tract at residues 101 to 152 (ARQAPCSAPQTSVSDNGSFRRPVTPPSQTPARGLSRVHGNTGPTRVLPVPDY) is disordered. A compositionally biased stretch (polar residues) spans 108–117 (APQTSVSDNG). The residue at position 124 (Thr124) is a Phosphothreonine. The segment at 146 to 300 (VLPVPDYVSH…SKKRSRDHFR (155 aa)) is interaction with SNRNP200. Positions 147 to 183 (LPVPDYVSHPERWTKYSLEDVSEASEQSNRDAALAFL) are hom3; mediates interaction with the U5 snRNP complexes. The segment at 198 to 238 (FNQDPSSCGEGRVVFTKPVRDSEARAERKRVLKKGVGSGAG) is hom4; necessary for interaction with the PRPF19 complex and required for spliceosomal tri-snRNP complex assembly. Position 214 is an N6-acetyllysine (Lys214). The interval 216–317 (VRDSEARAER…GPGSERGPSV (102 aa)) is disordered. A compositionally biased stretch (low complexity) spans 240–250 (EAAVELAHLAG).

Belongs to the TSSC4 family. Interacts in a RNA-independent manner with distinct U5 snRNP-containing complexes, the mono-U5 snRNP and the post-splicing U5 snRNP-PRPF19 complex. Interacts with SNRNP200; the interaction is direct, excludes recruitment of C9ORF78 and WBP4 to SNRNP200 and negatively regulates its RNA helicase activity. Interacts with PRPF8; the interaction is direct. Expressed in placenta. Widely expressed in embryo and newborn.

The protein resides in the nucleus. It is found in the cytoplasm. In terms of biological role, protein associated with the U5 snRNP, during its maturation and its post-splicing recycling and which is required for spliceosomal tri-snRNP complex assembly in the nucleus. Has a molecular sequestering activity and transiently hinders SNRNP200 binding sites for constitutive splicing factors that intervene later during the assembly of the spliceosome and splicing. Together with its molecular sequestering activity, may also function as a molecular adapter and placeholder, coordinating the assembly of the U5 snRNP and its association with the U4/U6 di-snRNP. The protein is U5 small nuclear ribonucleoprotein TSSC4 of Mus musculus (Mouse).